The primary structure comprises 202 residues: Proteasome subunit beta 1 (202 aa).

M1 is a propeptide (removed in mature form; by autocatalysis). T2 serves as the catalytic Nucleophile.

The protein belongs to the peptidase T1B family. In terms of assembly, the 20S proteasome core is composed of 14 alpha and 14 beta subunits that assemble into four stacked heptameric rings, resulting in a barrel-shaped structure. The two inner rings, each composed of seven catalytic beta subunits, are sandwiched by two outer rings, each composed of seven alpha subunits. The catalytic chamber with the active sites is on the inside of the barrel. Has a gated structure, the ends of the cylinder being occluded by the N-termini of the alpha-subunits. Is capped at one or both ends by the proteasome regulatory ATPase, PAN.

The protein localises to the cytoplasm. The enzyme catalyses Cleavage of peptide bonds with very broad specificity.. The formation of the proteasomal ATPase PAN-20S proteasome complex, via the docking of the C-termini of PAN into the intersubunit pockets in the alpha-rings, triggers opening of the gate for substrate entry. Interconversion between the open-gate and close-gate conformations leads to a dynamic regulation of the 20S proteasome proteolysis activity. In terms of biological role, component of the proteasome core, a large protease complex with broad specificity involved in protein degradation. The protein is Proteasome subunit beta 1 of Pyrobaculum aerophilum (strain ATCC 51768 / DSM 7523 / JCM 9630 / CIP 104966 / NBRC 100827 / IM2).